Reading from the N-terminus, the 720-residue chain is Calcium/calmodulin-dependent protein kinase type II (720 aa).

A Protein kinase domain is found at Tyr-12 to Ile-269. ATP-binding positions include Leu-18 to Val-26 and Lys-41. Residue Asp-134 is the Proton acceptor of the active site. Thr-284 bears the Phosphothreonine; by autocatalysis mark. Disordered regions lie at residues Ser-317–Ser-345 and Asp-504–Ala-586. 2 stretches are compositionally biased toward polar residues: residues Asp-504–Leu-514 and Pro-526–Ile-540. Residues Ser-569 to Ala-586 are compositionally biased toward low complexity.

Belongs to the protein kinase superfamily. CAMK Ser/Thr protein kinase family. CaMK subfamily. Dodecamer. Subunits are tightly packed around a central ring-shaped scaffold with extensive contacts between the regulatory segment of one kinase and the catalytic domain of another enabling cooperative activation of a subunit by the adjacent molecule. Interacts with and phosphorylates daf-16; the interaction promotes daf-16 nuclear localization. Interacts with egl-2 and tir-1. Interacts with nsy-1. The cofactor is Mg(2+). As to expression, expressed in the nervous system. Observed in the ADF and AWC neurons. Position in AWC neurons is regulated by microtubules. Localized to clusters in ventral cord neurites which appear to be required for glr-1 trafficking. Also present in oocytes.

Its subcellular location is the cytoplasm. It is found in the cell projection. It localises to the axon. The protein localises to the perikaryon. The catalysed reaction is L-seryl-[protein] + ATP = O-phospho-L-seryl-[protein] + ADP + H(+). It catalyses the reaction L-threonyl-[protein] + ATP = O-phospho-L-threonyl-[protein] + ADP + H(+). Ca2(+)/calmodulin binding removes an autoinhibitory regulatory segment located C-terminal to the kinase domain. This releases the catalytic activity of the enzyme and makes accessible a regulatory residue Thr-284. Phosphorylation of Thr-284 by another kinase domain within the oligomeric holoenzyme keeps CaMKII active in the absence of Ca(2+)/calmodulin by preventing the rebinding of the regulatory segment to the kinase domain and by increasing the affinity of calmodulin for the enzyme. Can respond to high-frequency Ca(2+) pulses to become Ca(2+) independent. In terms of biological role, acts in the signaling of a variety of pathways and processes. Phosphorylates 'Ser-319' of daf-16 in response to stress signals, such as heat, starvation and oxidation, which plays a role in prolonging lifespan. Required for viability under chronic osmotic stress in which it acts downstream of osr-1. Has roles in locomotion, oocyte maturation, brood size, egg laying, defecation, meiotic maturation and neuronal cell fate specification. Required for the regulation of synaptic density and neuromuscular junction morphology. Regulates the synaptic trafficking of glr-1. Bidirectional modulator of neurotransmitter release with negative modulatory effects mainly mediated via slo-1 activation. Involved in activation of ADF neurons and increased tph-1 transcription following exposure to pathogenic bacteria which leads to learned olfactory aversion to the bacteria. Implicated in the muscle regulation of spicule protraction. In conjunction with egl-2 has a role in the suppression of mating behavior under food deprivation to encourage foraging. Involved in restricting str-2 expression to only one of the two AWC neurons. May suppress the functional response to an internal pacemaker, perhaps by modulating the activity of the IP3 receptor. In Caenorhabditis elegans, this protein is Calcium/calmodulin-dependent protein kinase type II (unc-43).